The sequence spans 34 residues: Antimicrobial peptide Alo-1 (34 aa).

Cystine bridges form between Cys-1-Cys-18, Cys-8-Cys-22, and Cys-17-Cys-33.

It is found in the secreted. Has antifungal activity against C.glabrata. This Acrocinus longimanus (Giant harlequin beetle) protein is Antimicrobial peptide Alo-1.